Consider the following 2169-residue polypeptide: MATDGITSRFGFNERRRTHNRNSCRILEDKMLAKLLLLALAGLTAAYQYENSFKGYNPGYKGYDAGYKGYGYDAGYKYNNQGYSYKNGFEYGYQNAYQAAFYKHRPNVTEFEFSSWMPNYEYVYNVTSKTMTALAELDDQWTGVFTRAYLVIRPKSRDYVVAYVKQPEYAVFNERLPYGYATKFYHDMFKFQPMPMSSKPFGIRYHKGAIKGLYVEKTIPNNEVNILKAWISQLQVDTRGANLMHSSKPIHPSKNEWNGHYKVMEPLVTGECETHYDVNLIPAYMIQAHKQWVPQGQLRGEDGQFIQVTKTQNFDRCDQRMGYHFGFTGYSDFRPNTNQMGNVASKSLVSYMYLTGNWYNFTIQSSSMINKVAIAPSLVNKEPALVYAQVNMTLNDVHPYDKVPMGPAEDLKVFVDLVYSYNMPSDKKNYVRPGNETSSSSSSSSSSSSSSSESSSSSSESVENPKISPVEQYKPLLDKVEKRGNRYRRDLNAIKEKKYYEAYKMDQYRLHRLNDTSSDSSSSDSSSSSSSESKEHRNGTSSYSSSSSSSSSSSSSESSSYSSSSSSSSESYSISSEEYYYQPTPANFSYAPEAPFLPFFTGYKGYNIFYARNVDAIRSVGKLVEEIASDLENPSDLPKSNTMSKFNILTRAIRAMGYEDIYELAQKYFVSQKERQVAQFSDKKFSKRVDAWVTLRDAVAEAGTPSAFKLIFDFIKEKKLRGYEAATVIASLAQSIRYPTEHLLHEFFLLVTSDVVLHQEYLNATALFAYSNFVNQAHVSNRSAYNYYPVFSFGRLADADYKIIEHKIVPWFAHQLREAVNEGDSVKIQVYIRSLGNLGHPQILSVFEPYLEGTIQITDFQRLAIMVALDNLVIYYPSLARSVLYRAYQNTADVHEVRCAAVHLLMRTDPPADMLQRMAEFTHHDPSLYVRAAVKSAIETAALADDYDEDSKLAINAKAAINFLNPEDVSIQYSFNHIRDYALENLELSYRLHYGEIASNDHRYPSGLFYHLRQNFGGFKKYTSFYYLVSSMEAFFDIFKKQYNTKYFADYYKSADYSTNYYNFDKYSKYYKQYYYSKDSEYYQKFYGQKKDYYNDKEPFKFTAPRIAKLLNIDAEEAEQLEGQLLFKLFNGYFFTAFDNQTIENLPHKMRHLFENLEDGYAFDVTKFYQQQDVVLAWPLATGFPFIYTLKAPTVFKFEVDASAKTHPQVYKMPAGHPETENDDFFYMPQSINGSVDVNLLYHRMVDAKVGFVTPFDHQRYIAGYQKKLHGYLPFNVELGLDFVKDEYEFEFKFLEPKDDHLLFHMSSWPYTGYKDITDMRPIAENPNAKIVHDDNQSTKTMEHTFGQDMTGVALRFHAKYDFDLINFQQFWSLVQKNDFVSAVNYPFAYQPYEYHQFNLFYDSQRTHAKSFKFYAYQKFGAPSFEETGPKHPANRHSYSGNYYESNYAQPFVYSPGSQRRYEQFFRNAASGIRNSFVRYYDFGFEFYAPQYKSEFTFTTAFADSPVDKTSRQLYYFYASPMFPSQSYFKDIPFSGKQFQFCATATSEFPRVPYLKFSDFDKYYGDASQYFDFLYGESCQGGAHIAVKGKQKQTGKYREYLRFSDVAKACKEQMANGYYQFEECQQAIDQAYYYDFYDYAIEYKDVGSVAKNLTNKFYNYFQYAFYPYFESNFFYHGKSNYIKAEFEFAPYGDYYNASFFGPSYAFQVQNYPVFNDYSTYFPYFFKYTFFPRYQPYYMHRLPAHKPRNRPYYELSNYEQFAVFDRKPQYPSCSFSNDYFYTFDNKKYFYDMGECWHAVMYTVKPDYDFYAQQSHFYNSDFEYKYKNGFEEYEQFAALARRGSDNQLYFKFLFGDNYIEVFPNNGGIPFVKYNGRPYDISKSNIAHFEYKEGYPSFPFFYAFAYPNKDLEVSFFGGKLKFATDGYRARFFSDYSFYNNFVGLCGTNNGEYFDEFVTPDQCYMRKPEFFAASYAITGQNCTGPAKAFNYAYQQKAKQECVKREVYYGDIIYNQEYYHPRYRYYNHNVEESSSSSSSSSSDSSSSSSSSESSSRSRSGSSSSSSSSEEQKEFHPHKQEHSMKECPVQHQHQFFEQGDRTCFSLRPLPVCHSKCVATEKISKYFDVHCFEKDSTQAKKYKSDIGRGYTPDFKSFAPHKTYKFNYPKSCVYKAY.

An N-terminal signal peptide occupies residues 1 to 46 (MATDGITSRFGFNERRRTHNRNSCRILEDKMLAKLLLLALAGLTAA). N-linked (GlcNAc...) asparagine glycosylation is found at Asn107 and Asn125. Residues 116–1008 (WMPNYEYVYN…SNDHRYPSGL (893 aa)) enclose the Vitellogenin domain. A sulfotyrosine mark is found at Tyr159 and Tyr163. Residues Asn360, Asn391, and Asn435 are each glycosylated (N-linked (GlcNAc...) asparagine). Disordered regions lie at residues 426-481 (DKKN…DKVE) and 514-570 (NDTS…SSSE). Residues 438 to 461 (SSSSSSSSSSSSSSSESSSSSSES) show a composition bias toward low complexity. The N-linked (GlcNAc...) asparagine glycan is linked to Asn514. Residues 517–531 (SSDSSSSDSSSSSSS) show a composition bias toward low complexity. The N-linked (GlcNAc...) asparagine glycan is linked to Asn538. Positions 541–570 (SSYSSSSSSSSSSSSSESSSYSSSSSSSSE) are enriched in low complexity. 3 N-linked (GlcNAc...) asparagine glycosylation sites follow: Asn587, Asn763, and Asn781. Residues Tyr1067, Tyr1070, and Tyr1074 each carry the sulfotyrosine modification. N-linked (GlcNAc...) asparagine glycosylation is found at Asn1140, Asn1233, and Asn1336. Residues Tyr1563, Tyr1564, and Tyr1570 each carry the sulfotyrosine modification. Asn1652 and Asn1696 each carry an N-linked (GlcNAc...) asparagine glycan. A sulfotyrosine mark is found at Tyr1737, Tyr1806, Tyr1809, Tyr1822, Tyr1824, and Tyr1888. The 210-residue stretch at 1770–1979 (PSCSFSNDYF…SYAITGQNCT (210 aa)) folds into the VWFD domain. 2 disulfides stabilise this stretch: Cys1772/Cys1942 and Cys1794/Cys1978. N-linked (GlcNAc...) asparagine glycosylation occurs at Asn1977. Low complexity predominate over residues 2026 to 2063 (EESSSSSSSSSSDSSSSSSSSESSSRSRSGSSSSSSSS). The disordered stretch occupies residues 2026-2081 (EESSSSSSSSSSDSSSSSSSSESSSRSRSGSSSSSSSSEEQKEFHPHKQEHSMKEC). Residues 2064-2079 (EEQKEFHPHKQEHSMK) are compositionally biased toward basic and acidic residues.

In terms of processing, glycosylated, phosphorylated and sulfated. The large subunit is sulfated more extensively than the small one. As to expression, produced by the fat body, where it is cleaved in the rough endoplasmic reticulum or cis-Golgi before being secreted into hemolymph. It is then sequestered by a single class of receptor mediated endocytosis in the ovary.

Its function is as follows. Precursor of the egg-yolk proteins that are sources of nutrients during embryonic development. May supply aromatic amino acids to the cuticle of rapidly developing embryos. The chain is Vitellogenin-A1 (VGA1) from Aedes aegypti (Yellowfever mosquito).